The following is a 159-amino-acid chain: Antitoxin Xre (159 aa).

Belongs to the MbcA/ParS/Xre antitoxin family. Homodimer. Forms a complex with cognate toxin Res; the 2 toxin molecules dimerize and each contacts an Xre homodimer. Most Res-Xre contacts are between the antitoxin molecule closest to the toxin.

Its function is as follows. Probable antitoxin component of a type II toxin-antitoxin (TA) system. In vivo probably neutralizes the toxic effect of cognate toxin Res. The protein is Antitoxin Xre of Pseudomonas putida (strain ATCC 47054 / DSM 6125 / CFBP 8728 / NCIMB 11950 / KT2440).